An 85-amino-acid chain; its full sequence is UPF0291 protein SGO_0570 (85 aa).

A disordered region spans residues 56–85 (EDGNDVTPEKLRQVQREKGLHGRSLDDPNS). Over residues 62–85 (TPEKLRQVQREKGLHGRSLDDPNS) the composition is skewed to basic and acidic residues.

This sequence belongs to the UPF0291 family.

It is found in the cytoplasm. In Streptococcus gordonii (strain Challis / ATCC 35105 / BCRC 15272 / CH1 / DL1 / V288), this protein is UPF0291 protein SGO_0570.